The chain runs to 135 residues: Small ribosomal subunit protein uS12 (135 aa).

The tract at residues 1-29 (MPTINQLVRKGREKVEKKSKAPALQGNPQ) is disordered. Residue Asp89 is modified to 3-methylthioaspartic acid. The interval 106–135 (GVKDRKQSRSKYGAKRPKPGQAAATTGKKK) is disordered. A compositionally biased stretch (basic residues) spans 113–123 (SRSKYGAKRPK).

The protein belongs to the universal ribosomal protein uS12 family. Part of the 30S ribosomal subunit. Contacts proteins S8 and S17. May interact with IF1 in the 30S initiation complex.

Functionally, with S4 and S5 plays an important role in translational accuracy. In terms of biological role, interacts with and stabilizes bases of the 16S rRNA that are involved in tRNA selection in the A site and with the mRNA backbone. Located at the interface of the 30S and 50S subunits, it traverses the body of the 30S subunit contacting proteins on the other side and probably holding the rRNA structure together. The combined cluster of proteins S8, S12 and S17 appears to hold together the shoulder and platform of the 30S subunit. This Sulfurihydrogenibium sp. (strain YO3AOP1) protein is Small ribosomal subunit protein uS12.